Consider the following 524-residue polypeptide: Tubulin-specific chaperone E (524 aa).

An N-acetylserine modification is found at Ser-2. The region spanning 27 to 71 (GAVPPVAGLWLGVEWDNPERGKHDGSHEGTMYFKCRHPTGGSFVR) is the CAP-Gly domain. 7 LRR repeats span residues 154-175 (NIRV…ILIA), 180-201 (DLEA…PTLT), 206-227 (TLKT…HCAP), 231-253 (VLQE…NALQ), 254-273 (NLRL…QLCL), 279-300 (RLEH…DAEI), and 309-330 (ALTY…NELD). One can recognise an LRRCT domain in the interval 343 to 381 (NPLTKGDKAEEIIIAKIGQLKTLNRCQILPEERRGAELD). Lys-460 carries the N6-acetyllysine modification. At Ser-492 the chain carries Phosphoserine.

Belongs to the TBCE family. As to quaternary structure, supercomplex made of cofactors A to E. Cofactors A and D function by capturing and stabilizing tubulin in a quasi-native conformation. Cofactor E binds to the cofactor D-tubulin complex; interaction with cofactor C then causes the release of tubulin polypeptides that are committed to the native state. Cofactors B and E can form a heterodimer which binds to alpha-tubulin and enhances their ability to dissociate tubulin heterodimers. Interacts with TBCD.

It localises to the cytoplasm. The protein resides in the cytoskeleton. Tubulin-folding protein; involved in the second step of the tubulin folding pathway and in the regulation of tubulin heterodimer dissociation. Required for correct organization of microtubule cytoskeleton and mitotic splindle, and maintenance of the neuronal microtubule network. In Rattus norvegicus (Rat), this protein is Tubulin-specific chaperone E (Tbce).